Consider the following 347-residue polypeptide: Terpene synthase 2 (347 aa).

Positions 103, 247, 251, and 255 each coordinate Mg(2+). Positions aspartate 103–glutamate 107 match the D(D/E)XX(D/E) motif motif. Positions asparagine 247–glutamate 255 match the NSE motif motif. A WxxxxxRY motif motif is present at residues tryptophan 329–tyrosine 336.

This sequence belongs to the terpene synthase family. Mg(2+) serves as cofactor.

Terpene synthase that may be involved in the production of volatile terpenoids. Does not show detectable terpene products with either farnesyl diphosphate (FPP) or geranyl diphosphate (GPP). P.polycephalum has a unique biology and these volatile terpenoids could function in internal communication of P.polycephalum, to mark the territory that have been explored, or they may be involved in chemotaxis. The chain is Terpene synthase 2 from Physarum polycephalum (Slime mold).